The following is a 39-amino-acid chain: Cytochrome b6-f complex subunit 5 (39 aa).

Residues 5-25 traverse the membrane as a helical segment; sequence LLSGIVLGLVPVTILGLFVTA.

Belongs to the PetG family. The 4 large subunits of the cytochrome b6-f complex are cytochrome b6, subunit IV (17 kDa polypeptide, PetD), cytochrome f and the Rieske protein, while the 4 small subunits are PetG, PetL, PetM and PetN. The complex functions as a dimer.

The protein resides in the plastid. The protein localises to the chloroplast thylakoid membrane. Component of the cytochrome b6-f complex, which mediates electron transfer between photosystem II (PSII) and photosystem I (PSI), cyclic electron flow around PSI, and state transitions. PetG is required for either the stability or assembly of the cytochrome b6-f complex. The chain is Cytochrome b6-f complex subunit 5 from Pleurastrum terricola (Filamentous green alga).